The following is a 316-amino-acid chain: Acetaldehyde dehydrogenase 1 (316 aa).

12–15 (SGNI) contributes to the NAD(+) binding site. The Acyl-thioester intermediate role is filled by Cys-132. Residues 163–171 (SAGPGTRAN) and Asn-291 each bind NAD(+).

It belongs to the acetaldehyde dehydrogenase family.

The enzyme catalyses acetaldehyde + NAD(+) + CoA = acetyl-CoA + NADH + H(+). The sequence is that of Acetaldehyde dehydrogenase 1 from Pseudomonas putida (strain ATCC 700007 / DSM 6899 / JCM 31910 / BCRC 17059 / LMG 24140 / F1).